We begin with the raw amino-acid sequence, 186 residues long: Signal peptidase I (186 aa).

The Cytoplasmic portion of the chain corresponds to 1–19; that stretch reads MTEEKSTNKKNSLFEWVKA. Residues 20–40 form a helical membrane-spanning segment; that stretch reads IIIAVVLALLIRAFLFEPYLV. Over 41-186 the chain is Extracellular; it reads EGTSMDPTLH…FPFNEIRKTD (146 aa). Active-site residues include S44 and K86.

This sequence belongs to the peptidase S26 family.

The protein resides in the cell membrane. The enzyme catalyses Cleavage of hydrophobic, N-terminal signal or leader sequences from secreted and periplasmic proteins.. In Bacillus licheniformis, this protein is Signal peptidase I (lepB).